The following is a 457-amino-acid chain: Chromosomal replication initiator protein DnaA (457 aa).

Residues 1 to 77 (MDTNNNIEKE…EILSQNKVGM (77 aa)) form a domain I, interacts with DnaA modulators region. The tract at residues 77–108 (MHLAHSVDVRIEVAPKIQVNAQSNINYKATKT) is domain II. A domain III, AAA+ region region spans residues 109 to 323 (SVKDSYTFEN…GAIIKISVNA (215 aa)). Gly153, Gly155, Lys156, and Thr157 together coordinate ATP. The segment at 324–457 (NLMNATIDLN…DKKTAFNSSE (134 aa)) is domain IV, binds dsDNA.

The protein belongs to the DnaA family. In terms of assembly, oligomerizes as a right-handed, spiral filament on DNA at oriC.

The protein resides in the cytoplasm. Its function is as follows. Plays an essential role in the initiation and regulation of chromosomal replication. ATP-DnaA binds to the origin of replication (oriC) to initiate formation of the DNA replication initiation complex once per cell cycle. Binds the DnaA box (a 9 base pair repeat at the origin) and separates the double-stranded (ds)DNA. Forms a right-handed helical filament on oriC DNA; dsDNA binds to the exterior of the filament while single-stranded (ss)DNA is stabiized in the filament's interior. The ATP-DnaA-oriC complex binds and stabilizes one strand of the AT-rich DNA unwinding element (DUE), permitting loading of DNA polymerase. After initiation quickly degrades to an ADP-DnaA complex that is not apt for DNA replication. Binds acidic phospholipids. The chain is Chromosomal replication initiator protein DnaA from Helicobacter pylori (strain J99 / ATCC 700824) (Campylobacter pylori J99).